Consider the following 510-residue polypeptide: Bifunctional purine biosynthesis protein PurH (510 aa).

One can recognise an MGS-like domain in the interval 1–143 (MTKRALISVS…KNHSGVLVLV (143 aa)).

Belongs to the PurH family.

The catalysed reaction is (6R)-10-formyltetrahydrofolate + 5-amino-1-(5-phospho-beta-D-ribosyl)imidazole-4-carboxamide = 5-formamido-1-(5-phospho-D-ribosyl)imidazole-4-carboxamide + (6S)-5,6,7,8-tetrahydrofolate. It carries out the reaction IMP + H2O = 5-formamido-1-(5-phospho-D-ribosyl)imidazole-4-carboxamide. It participates in purine metabolism; IMP biosynthesis via de novo pathway; 5-formamido-1-(5-phospho-D-ribosyl)imidazole-4-carboxamide from 5-amino-1-(5-phospho-D-ribosyl)imidazole-4-carboxamide (10-formyl THF route): step 1/1. The protein operates within purine metabolism; IMP biosynthesis via de novo pathway; IMP from 5-formamido-1-(5-phospho-D-ribosyl)imidazole-4-carboxamide: step 1/1. This Deinococcus deserti (strain DSM 17065 / CIP 109153 / LMG 22923 / VCD115) protein is Bifunctional purine biosynthesis protein PurH.